A 518-amino-acid chain; its full sequence is Adenine deaminase (518 aa).

This sequence belongs to the metallo-dependent hydrolases superfamily. Adenine deaminase family. The cofactor is Mn(2+).

The enzyme catalyses adenine + H2O + H(+) = hypoxanthine + NH4(+). This Methanoculleus marisnigri (strain ATCC 35101 / DSM 1498 / JR1) protein is Adenine deaminase.